Consider the following 1425-residue polypeptide: Rho GTPase-activating protein 31 (1425 aa).

Residues 21-216 enclose the Rho-GAP domain; that stretch reads CDLTEYLESS…FILNHADQIF (196 aa). Positions 258-277 are disordered; it reads LATNHPARKERRENSLPEIV. The residue at position 272 (S272) is a Phosphoserine. T283 is subject to Phosphothreonine. S343, S346, S384, and S464 each carry phosphoserine. Residues 511 to 522 show a composition bias toward low complexity; sequence EEFSFQGSESGG. Disordered stretches follow at residues 511–621, 652–700, and 756–951; these read EEFS…GAGT, SEEE…TRDA, and IEIG…GNSH. 2 stretches are compositionally biased toward basic and acidic residues: residues 543–556 and 587–600; these read AATEDTKPEPEVPG and KEAEKRPKAEKVME. Over residues 603 to 615 the composition is skewed to polar residues; the sequence is QGASQPKPSTPQE. T666 carries the post-translational modification Phosphothreonine. Pro residues predominate over residues 671–681; the sequence is ESSPAPFPFPE. Phosphoserine occurs at positions 685, 690, and 765. Positions 767–777 are enriched in pro residues; the sequence is PLTPAPPPPTP. T769 is modified (phosphothreonine). Residue T776 is modified to Phosphothreonine; by GSK3. Residues 789 to 804 show a composition bias toward basic and acidic residues; the sequence is EGPDREDAARDSRTDV. Polar residues predominate over residues 936-951; it reads LRQSHSLDSKTTGNSH. A phosphoserine mark is found at S961, S1092, S1093, and S1163. Positions 1031–1095 are disordered; it reads KEQEPQLELS…KGKHRPSSLN (65 aa). Composition is skewed to polar residues over residues 1196-1206, 1250-1260, and 1299-1308; these read QIPQPLPSQST, QETGASASRRQ, and TEPSGDNLLS. Disordered stretches follow at residues 1196 to 1260 and 1291 to 1327; these read QIPQ…SRRQ and QCRKRTSETEPSGDNLLSSKLERASGGPKAFHRSRPG.

Interacts with ITSN1, which inhibits GAP activity. Interacts with PARVA. Interacts with GTP-loaded RHOU. In terms of processing, phosphorylated on Thr-776 by GSK3; which reduces GAP activity. Expressed at highest levels in heart and lung.

The protein localises to the cell projection. The protein resides in the lamellipodium. It localises to the cell junction. It is found in the focal adhesion. Functionally, functions as a GTPase-activating protein (GAP) for RAC1 and CDC42. Required for cell spreading, polarized lamellipodia formation and cell migration. In Mus musculus (Mouse), this protein is Rho GTPase-activating protein 31 (Arhgap31).